The following is a 485-amino-acid chain: uncharacterized protein (485 aa).

An N-terminal signal peptide occupies residues 1 to 23 (MRRRVCTVVRAVVCLLSTSLLTT). C24 carries N-palmitoyl cysteine lipidation. The S-diacylglycerol cysteine moiety is linked to residue C24. Positions 308-327 (SAASSPAQCPSSPSSSSSSS) are enriched in low complexity. The interval 308–331 (SAASSPAQCPSSPSSSSSSSTNAG) is disordered.

Belongs to the TP013X lipoprotein family.

The protein resides in the cell membrane. This is an uncharacterized protein from Treponema pallidum (strain Nichols).